A 253-amino-acid polypeptide reads, in one-letter code: Ubiquinone/menaquinone biosynthesis C-methyltransferase UbiE (253 aa).

S-adenosyl-L-methionine-binding positions include Thr76, Asp97, and 125–126; that span reads NA.

The protein belongs to the class I-like SAM-binding methyltransferase superfamily. MenG/UbiE family.

The enzyme catalyses a 2-demethylmenaquinol + S-adenosyl-L-methionine = a menaquinol + S-adenosyl-L-homocysteine + H(+). It catalyses the reaction a 2-methoxy-6-(all-trans-polyprenyl)benzene-1,4-diol + S-adenosyl-L-methionine = a 5-methoxy-2-methyl-3-(all-trans-polyprenyl)benzene-1,4-diol + S-adenosyl-L-homocysteine + H(+). Its pathway is quinol/quinone metabolism; menaquinone biosynthesis; menaquinol from 1,4-dihydroxy-2-naphthoate: step 2/2. It functions in the pathway cofactor biosynthesis; ubiquinone biosynthesis. Methyltransferase required for the conversion of demethylmenaquinol (DMKH2) to menaquinol (MKH2) and the conversion of 2-polyprenyl-6-methoxy-1,4-benzoquinol (DDMQH2) to 2-polyprenyl-3-methyl-6-methoxy-1,4-benzoquinol (DMQH2). This is Ubiquinone/menaquinone biosynthesis C-methyltransferase UbiE from Bradyrhizobium diazoefficiens (strain JCM 10833 / BCRC 13528 / IAM 13628 / NBRC 14792 / USDA 110).